We begin with the raw amino-acid sequence, 963 residues long: Seizure 6-like protein (963 aa).

Residues 1–31 (MPVARPQAAGPDRISLFLVAFLLGSPAAAQA) form the signal peptide. Disordered stretches follow at residues 28–63 (AAQA…GVTS), 116–150 (RPLA…TAPA), and 164–204 (LPHS…TTTS). Residues 32–897 (EDGGPEGEMH…ESSLEGGNMA (866 aa)) are Extracellular-facing. A compositionally biased stretch (low complexity) spans 47 to 59 (LLPSASLESSLEE). Over residues 120–135 (TPTTLQRLGSPASATT) the composition is skewed to polar residues. Residues 191–204 (TGSASEESQETTTS) are compositionally biased toward low complexity. A disulfide bridge links C221 with C248. Residues 221 to 329 (CGVSFSDPEG…GTFQLHYQAF (109 aa)) form the CUB 1 domain. N-linked (GlcNAc...) asparagine glycosylation is found at N251, N268, and N290. One can recognise a Sushi 1 domain in the interval 331–390 (LSCPFPRRPDAGEVTVMDLHSGGVAHFHCHLGYELQGAKTLTCINASKPHWSSQEPVCSA). Disulfide bonds link C333–C373, C359–C388, and C392–C419. N-linked (GlcNAc...) asparagine glycosylation is found at N375, N398, N414, N454, N516, and N558. The CUB 2 domain maps to 392 to 502 (CGGAVHNATI…SAFNIRFEAF (111 aa)). In terms of domain architecture, Sushi 2 spans 505-566 (GHCYEPYIQN…WNDTEPLCRA (62 aa)). Cystine bridges form between C507–C549, C534–C564, and C568–C594. The region spanning 568-679 (CGGELSAVAG…QGFIMNYIEV (112 aa)) is the CUB 3 domain. 2 N-linked (GlcNAc...) asparagine glycosylation sites follow: N614 and N682. 3 Sushi domains span residues 683–742 (DSCS…FCEK), 744–807 (MYCT…HCVS), and 811–872 (LACD…ICKV). 6 cysteine pairs are disulfide-bonded: C685-C727, C713-C740, C746-C788, C774-C805, C813-C855, and C841-C870. The chain crosses the membrane as a helical span at residues 898-918 (LAIFIPVLLISLLLGGAYIYV). The Cytoplasmic segment spans residues 919–963 (TRCRQYSSLRLPLMYSHPYSQITVETEFDNPIYETGETREYEVSI).

The protein belongs to the SEZ6 family. Expressed exclusively in the brain, predominantly in neurons. Wide expression in the gray matter of the brain with high levels in the olfactory bulb, anterior olfactory nuclei, hippocampal formation and cerebellar cortex. Detected diffusely and weakly in the white matter, such as the corpus callosum and cerebellar medulla. In the cerebellar cortex, intensely expressed in Purkinje cells and granule cells. Detected also in interneurons in the molecular layer.

It is found in the cell membrane. The protein resides in the endoplasmic reticulum membrane. Candidate tumor suppressor gene. May contribute to specialized endoplasmic reticulum functions in neurons. The chain is Seizure 6-like protein (Sez6l) from Mus musculus (Mouse).